The following is a 277-amino-acid chain: 4-hydroxy-tetrahydrodipicolinate reductase (277 aa).

Residue 9 to 14 (GATGRM) coordinates NAD(+). Residue Lys37 coordinates NADP(+). 75-77 (GTS) serves as a coordination point for NAD(+). His132 (proton donor/acceptor) is an active-site residue. Residue Lys136 is the Proton donor of the active site. Residue 142 to 143 (GT) coordinates (S)-2,3,4,5-tetrahydrodipicolinate. Disordered stretches follow at residues 154 to 173 (ARGA…ARGQ) and 247 to 277 (ERAA…VTSA). A compositionally biased stretch (low complexity) spans 250-265 (AQAAAGDAPSGPVDDG).

Belongs to the DapB family.

It localises to the cytoplasm. It carries out the reaction (S)-2,3,4,5-tetrahydrodipicolinate + NAD(+) + H2O = (2S,4S)-4-hydroxy-2,3,4,5-tetrahydrodipicolinate + NADH + H(+). The catalysed reaction is (S)-2,3,4,5-tetrahydrodipicolinate + NADP(+) + H2O = (2S,4S)-4-hydroxy-2,3,4,5-tetrahydrodipicolinate + NADPH + H(+). The protein operates within amino-acid biosynthesis; L-lysine biosynthesis via DAP pathway; (S)-tetrahydrodipicolinate from L-aspartate: step 4/4. Functionally, catalyzes the conversion of 4-hydroxy-tetrahydrodipicolinate (HTPA) to tetrahydrodipicolinate. The polypeptide is 4-hydroxy-tetrahydrodipicolinate reductase (Clavibacter michiganensis subsp. michiganensis (strain NCPPB 382)).